The sequence spans 1116 residues: DNA-directed RNA polymerase subunit beta (1116 aa).

The span at 1070–1100 (KIREEEKEREKEREAREMEDPEKIVSKIDAK) shows a compositional bias: basic and acidic residues. Residues 1070–1116 (KIREEEKEREKEREAREMEDPEKIVSKIDAKQKKKYKKTKKQTEKKK) form a disordered region. Residues 1101–1116 (QKKKYKKTKKQTEKKK) are compositionally biased toward basic residues.

This sequence belongs to the RNA polymerase beta chain family. In plastids the minimal PEP RNA polymerase catalytic core is composed of four subunits: alpha, beta, beta', and beta''. When a (nuclear-encoded) sigma factor is associated with the core the holoenzyme is formed, which can initiate transcription.

The protein resides in the plastid. It is found in the chloroplast. It catalyses the reaction RNA(n) + a ribonucleoside 5'-triphosphate = RNA(n+1) + diphosphate. DNA-dependent RNA polymerase catalyzes the transcription of DNA into RNA using the four ribonucleoside triphosphates as substrates. This chain is DNA-directed RNA polymerase subunit beta, found in Heterosigma akashiwo (Chromophytic alga).